Reading from the N-terminus, the 35-residue chain is Putative gene 58 protein (35 aa).

The protein is Putative gene 58 protein (58) of Bacillus phage SP01 (Bacteriophage SP01).